A 188-amino-acid chain; its full sequence is FMN-dependent NADPH-azoreductase (188 aa).

This sequence belongs to the azoreductase type 2 family. In terms of assembly, homotetramer. FMN is required as a cofactor.

Functionally, catalyzes the reductive cleavage of azo bond in aromatic azo compounds to the corresponding amines. Requires NADPH, but not NADH, as an electron donor for its activity. In Staphylococcus haemolyticus (strain JCSC1435), this protein is FMN-dependent NADPH-azoreductase (azo1).